A 333-amino-acid chain; its full sequence is Fructose-1,6-bisphosphatase class 1 (333 aa).

The Mg(2+) site is built by Glu-92, Asp-113, Leu-115, and Asp-116. Substrate contacts are provided by residues 116-119 (DGSS), Asn-209, Tyr-242, and Lys-272. Glu-278 contacts Mg(2+).

Belongs to the FBPase class 1 family. In terms of assembly, homotetramer. Requires Mg(2+) as cofactor.

Its subcellular location is the cytoplasm. The catalysed reaction is beta-D-fructose 1,6-bisphosphate + H2O = beta-D-fructose 6-phosphate + phosphate. It participates in carbohydrate biosynthesis; Calvin cycle. The sequence is that of Fructose-1,6-bisphosphatase class 1 from Chlorobaculum parvum (strain DSM 263 / NCIMB 8327) (Chlorobium vibrioforme subsp. thiosulfatophilum).